Consider the following 768-residue polypeptide: Probable beta-glucosidase M (768 aa).

The N-terminal stretch at 1–19 (MHAIAGLTGLLAGVSLSYA) is a signal peptide. Residues N25, N72, and N259 are each glycosylated (N-linked (GlcNAc...) asparagine). D287 is a catalytic residue. Residues N315, N322, N394, N434, N472, N543, and N651 are each glycosylated (N-linked (GlcNAc...) asparagine).

This sequence belongs to the glycosyl hydrolase 3 family.

It localises to the secreted. It carries out the reaction Hydrolysis of terminal, non-reducing beta-D-glucosyl residues with release of beta-D-glucose.. It functions in the pathway glycan metabolism; cellulose degradation. Functionally, beta-glucosidases are one of a number of cellulolytic enzymes involved in the degradation of cellulosic biomass. Catalyzes the last step releasing glucose from the inhibitory cellobiose. This Aspergillus oryzae (strain ATCC 42149 / RIB 40) (Yellow koji mold) protein is Probable beta-glucosidase M (bglM).